A 381-amino-acid polypeptide reads, in one-letter code: Creatine kinase M-type (381 aa).

Residues 11 to 98 (KLNFKAEEEY…FDPIIQDRHG (88 aa)) enclose the Phosphagen kinase N-terminal domain. The Phosphagen kinase C-terminal domain maps to 125 to 367 (YVLSSRVRTG…KLMVEMEKKL (243 aa)). 128 to 132 (SSRVR) contacts ATP. The residue at position 164 (Ser164) is a Phosphoserine. Thr166 is modified (phosphothreonine). Phosphoserine is present on Ser178. Thr180 bears the Phosphothreonine mark. His191 is an ATP binding site. Ser199 carries the post-translational modification Phosphoserine. ATP contacts are provided by Arg236 and Arg292. Thr313 and Thr322 each carry phosphothreonine. Residues 320-325 (RGTGGV) and Asp335 each bind ATP. A Phosphoserine modification is found at Ser372.

It belongs to the ATP:guanido phosphotransferase family. In terms of assembly, dimer of identical or non-identical chains, which can be either B (brain type) or M (muscle type). With MM being the major form in skeletal muscle and myocardium, MB existing in myocardium, and BB existing in many tissues, especially brain.

It localises to the cytoplasm. It catalyses the reaction creatine + ATP = N-phosphocreatine + ADP + H(+). In terms of biological role, reversibly catalyzes the transfer of phosphate between ATP and various phosphogens (e.g. creatine phosphate). Creatine kinase isoenzymes play a central role in energy transduction in tissues with large, fluctuating energy demands, such as skeletal muscle, heart, brain and spermatozoa. In Bos taurus (Bovine), this protein is Creatine kinase M-type (CKM).